The chain runs to 732 residues: Nephrocystin-1 (732 aa).

The stretch at 3-105 forms a coiled coil; sequence ARRQRDPLQA…LQGLAVTISR (103 aa). At tyrosine 46 the chain carries Phosphotyrosine; by FAK2. Disordered stretches follow at residues 103–153 and 205–244; these read ISRE…KWST and TYLE…KQRT. Acidic residues-rich tracts occupy residues 115 to 145 and 210 to 236; these read TEEE…EKEE and YSEE…ETAD. Residues serine 121, serine 123, and serine 126 each carry the phosphoserine; by CK2 modification. Residues 127–150 are a coiled coil; the sequence is EDSGGEEEDAEEEEEEKEENESHK. The region spanning 152-212 is the SH3 domain; that stretch reads STGEEYIAVG…PRTYLEPYSE (61 aa). Residue tyrosine 349 is modified to Phosphotyrosine; by FAK2. Tyrosine 721 carries the post-translational modification Phosphotyrosine; by SRC.

It belongs to the nephrocystin-1 family. In terms of assembly, interacts with BCAR1, PTK2B/PYK2 and tensin. Interacts with INVS and NPHP3. Interacts with PACS1; the interaction is dependent on NPHP1 phosphorylation by CK2. Interacts with KIF7. Interacts with AHI1 and TNK2. Interacts with NPHP4 in a complex containing NPHP1, NPHP4 and RPGRIP1L. Interacts with IQCB1; the interaction likely requires additional interactors. Interacts with ANKS3. Interacts with SPATA7. Interacts with FLNA. Post-translationally, phosphorylation by CK2 is required for the interaction with PACS1 and the targeting to the base region of cilia. Widespread expression, with highest levels in pituitary gland, spinal cord, thyroid gland, testis, skeletal muscle, lymph node and trachea. Weakly expressed in heart, kidney and pancreas. Expressed in nasal epithelial cells (at protein level). Expressed in the renal collecting duct (at protein level).

Its subcellular location is the cell junction. The protein resides in the adherens junction. It is found in the cell projection. It localises to the cilium. The protein localises to the cytoplasm. Its subcellular location is the cytoskeleton. The protein resides in the cilium axoneme. It is found in the tight junction. Functionally, together with BCAR1 it may play a role in the control of epithelial cell polarity. Involved in the organization of apical junctions in kidney cells together with NPHP4 and RPGRIP1L/NPHP8. Does not seem to be strictly required for ciliogenesis. Seems to help to recruit PTK2B/PYK2 to cell matrix adhesions, thereby initiating phosphorylation of PTK2B/PYK2 and PTK2B/PYK2-dependent signaling. May play a role in the regulation of intraflagellar transport (IFT) during cilia assembly. Required for normal retina development. In connecting photoreceptor cilia influences the movement of some IFT proteins such as IFT88 and WDR19. Involved in spermatogenesis. This Homo sapiens (Human) protein is Nephrocystin-1 (NPHP1).